A 574-amino-acid chain; its full sequence is Pyruvate kinase PKLR (574 aa).

A phosphoserine mark is found at S2, S19, S26, and S43. R116 contributes to the substrate binding site. K(+) contacts are provided by N118, S120, D156, and T157. 118 to 121 lines the ATP pocket; it reads NFSH. ATP is bound by residues R163 and K250. S292 bears the Phosphoserine mark. Substrate is bound at residue K313. E315 is a binding site for Mn(2+). Substrate-binding residues include G338, D339, and T371. Residue D339 coordinates Mn(2+). Beta-D-fructose 1,6-bisphosphate-binding positions include 475–480, W525, R532, and 559–564; these read TTTGRS and RPGSGY.

The protein belongs to the pyruvate kinase family. In terms of assembly, homotetramer. Mg(2+) serves as cofactor. The cofactor is Mn(2+). K(+) is required as a cofactor.

It catalyses the reaction pyruvate + ATP = phosphoenolpyruvate + ADP + H(+). It functions in the pathway carbohydrate degradation; glycolysis; pyruvate from D-glyceraldehyde 3-phosphate: step 5/5. Allosterically activated by fructose 1,6-bisphosphate. Pyruvate kinase that catalyzes the conversion of phosphoenolpyruvate to pyruvate with the synthesis of ATP, and which plays a key role in glycolysis. In Homo sapiens (Human), this protein is Pyruvate kinase PKLR (PKLR).